The primary structure comprises 698 residues: Inner centromere protein SLI15 (698 aa).

Position 268 is a phosphoserine (S268). Disordered regions lie at residues 365 to 390 (KNKI…FDKT), 405 to 444 (EQKK…EVKN), and 455 to 474 (RPTK…TSQT). Polar residues-rich tracts occupy residues 422–439 (RPHS…SSPS) and 459–474 (ASIS…TSQT). Residue S489 is modified to Phosphoserine. The segment at 535 to 560 (IMRSQQEHHRRKQEKQKRMSHLEQDL) is disordered. Basic and acidic residues predominate over residues 550–560 (QKRMSHLEQDL).

It belongs to the INCENP family. In terms of assembly, component of the CPC complex at least composed of IPL1, BIR1 and SLI15. In terms of processing, phosphorylated by serine/threonine protein kinase IPL1.

It localises to the nucleus. Its subcellular location is the cytoplasm. It is found in the cytoskeleton. The protein localises to the spindle. The protein resides in the chromosome. It localises to the centromere. Its subcellular location is the kinetochore. Functionally, component of the chromosomal passenger complex (CPC), a complex that acts as a key regulator of mitosis. Stimulates IPL1 kinase activity and facilitates its association with the mitotic spindle. Has a role in attaching the kinetochores to the microtubules and ensuring that sister kinetochores connect to opposite poles. This is Inner centromere protein SLI15 (SLI15) from Saccharomyces cerevisiae (strain ATCC 204508 / S288c) (Baker's yeast).